The chain runs to 209 residues: Peptide methionine sulfoxide reductase MsrA (209 aa).

Cys-14 is an active-site residue. A disordered region spans residues 183–209 (FSALTTGGNQPGARGGLTNNTCQHPRH). Polar residues predominate over residues 199–209 (LTNNTCQHPRH).

It belongs to the MsrA Met sulfoxide reductase family.

It catalyses the reaction L-methionyl-[protein] + [thioredoxin]-disulfide + H2O = L-methionyl-(S)-S-oxide-[protein] + [thioredoxin]-dithiol. The enzyme catalyses [thioredoxin]-disulfide + L-methionine + H2O = L-methionine (S)-S-oxide + [thioredoxin]-dithiol. In terms of biological role, has an important function as a repair enzyme for proteins that have been inactivated by oxidation. Catalyzes the reversible oxidation-reduction of methionine sulfoxide in proteins to methionine. This is Peptide methionine sulfoxide reductase MsrA from Pseudomonas fluorescens.